A 46-amino-acid chain; its full sequence is Defensin Tk-AMP-D6.1 (46 aa).

4 disulfide bridges follow: Cys3–Cys46, Cys14–Cys34, Cys20–Cys40, and Cys24–Cys42.

Its function is as follows. Plant defense peptide. The chain is Defensin Tk-AMP-D6.1 from Triticum kiharae (Wheat).